The chain runs to 1053 residues: Phosphoenolpyruvate carboxylase (1053 aa).

Histidine 246 is an active-site residue. Residues 461-473 (RNTRLQQQQEKDP) show a composition bias toward basic and acidic residues. The segment at 461–480 (RNTRLQQQQEKDPTTPLPEY) is disordered. The active site involves lysine 699.

Belongs to the PEPCase type 1 family. Mg(2+) serves as cofactor.

It carries out the reaction oxaloacetate + phosphate = phosphoenolpyruvate + hydrogencarbonate. Functionally, forms oxaloacetate, a four-carbon dicarboxylic acid source for the tricarboxylic acid cycle. The sequence is that of Phosphoenolpyruvate carboxylase (ppc) from Synechococcus sp. (strain ATCC 27144 / PCC 6301 / SAUG 1402/1) (Anacystis nidulans).